Consider the following 732-residue polypeptide: Acylamino-acid-releasing enzyme (732 aa).

Methionine 1 bears the N-acetylmethionine mark. Serine 187 bears the Phosphoserine mark. Catalysis depends on charge relay system residues serine 587, aspartate 675, and histidine 707.

This sequence belongs to the peptidase S9C family. As to quaternary structure, homotetramer. As to expression, expressed in the liver (at protein level).

The protein localises to the cytoplasm. The catalysed reaction is Cleavage of an N-acetyl or N-formyl amino acid from the N-terminus of a polypeptide.. Its activity is regulated as follows. Homotetramerization is required for activity. Tetramerization results in the formation of a gated channel which is involved in substrate selection and substrate access to the catalytic sites. This enzyme catalyzes the hydrolysis of the N-terminal peptide bond of an N-acetylated peptide to generate an N-acetylated amino acid and a peptide with a free N-terminus. It preferentially cleaves off Ac-Ala, Ac-Met and Ac-Ser. Also, involved in the degradation of oxidized and glycated proteins. The protein is Acylamino-acid-releasing enzyme (APEH) of Sus scrofa (Pig).